A 705-amino-acid polypeptide reads, in one-letter code: Translation factor GUF1 homolog, mitochondrial (705 aa).

A mitochondrion-targeting transit peptide spans 1 to 20; sequence MVCHRYLLGLGASTLCLRRL. Positions 72 to 92 are disordered; it reads PVEDNGTTNLTGTGEATSETG. The span at 76-90 shows a compositional bias: polar residues; sequence NGTTNLTGTGEATSE. Residues 105–288 enclose the tr-type G domain; it reads NRMRNFCIIA…AVVERIPPPK (184 aa). GTP-binding positions include 114 to 121, 181 to 185, and 235 to 238; these read AHVDHGKS, DTPGH, and NKID.

It belongs to the TRAFAC class translation factor GTPase superfamily. Classic translation factor GTPase family. LepA subfamily.

The protein localises to the mitochondrion inner membrane. It carries out the reaction GTP + H2O = GDP + phosphate + H(+). Its function is as follows. Promotes mitochondrial protein synthesis. May act as a fidelity factor of the translation reaction, by catalyzing a one-codon backward translocation of tRNAs on improperly translocated ribosomes. Binds to mitochondrial ribosomes in a GTP-dependent manner. This is Translation factor GUF1 homolog, mitochondrial from Babesia bovis.